Consider the following 443-residue polypeptide: Probable glycine dehydrogenase (decarboxylating) subunit 1 (443 aa).

This sequence belongs to the GcvP family. N-terminal subunit subfamily. In terms of assembly, the glycine cleavage system is composed of four proteins: P, T, L and H. In this organism, the P 'protein' is a heterodimer of two subunits.

The enzyme catalyses N(6)-[(R)-lipoyl]-L-lysyl-[glycine-cleavage complex H protein] + glycine + H(+) = N(6)-[(R)-S(8)-aminomethyldihydrolipoyl]-L-lysyl-[glycine-cleavage complex H protein] + CO2. Functionally, the glycine cleavage system catalyzes the degradation of glycine. The P protein binds the alpha-amino group of glycine through its pyridoxal phosphate cofactor; CO(2) is released and the remaining methylamine moiety is then transferred to the lipoamide cofactor of the H protein. The polypeptide is Probable glycine dehydrogenase (decarboxylating) subunit 1 (Maridesulfovibrio salexigens (strain ATCC 14822 / DSM 2638 / NCIMB 8403 / VKM B-1763) (Desulfovibrio salexigens)).